The primary structure comprises 316 residues: Taste receptor type 2 member 3 (316 aa).

The Extracellular portion of the chain corresponds to 1 to 7 (MLGFTEG). The chain crosses the membrane as a helical span at residues 8–28 (IFLVLTVTEFILGNLVNGFIV). Over 29-50 (SVNGSHWFKSKKISLSDFIITS) the chain is Cytoplasmic. A helical membrane pass occupies residues 51–71 (LALFRIFLLWIIFTDSLIIVF). The Extracellular segment spans residues 72 to 86 (SYHTHDSGIRMQLID). A helical membrane pass occupies residues 87–107 (VFWTFTNHFSIWLISCLSVFY). Residues 108–128 (CLKIATFSHPSFLWLKWRASR) are Cytoplasmic-facing. The chain crosses the membrane as a helical span at residues 129–149 (VVVGMLWGALVLSCVCTMSLM). The Extracellular segment spans residues 150–186 (NEFKIYSALTGSRDTQNMTEYIRLKRHEYNLMHVLGN). An N-linked (GlcNAc...) asparagine glycan is attached at Asn-166. A helical transmembrane segment spans residues 187–207 (LWKIPSLIVSLIAYFLLLLSL). The Cytoplasmic portion of the chain corresponds to 208–234 (GKHTQQMQKYSVGSRDQSAEAHRRAMR). The chain crosses the membrane as a helical span at residues 235 to 255 (IILSFLLFFLFYFLSFVILSS). At 256–266 (SRFLPETKIAR) the chain is on the extracellular side. The helical transmembrane segment at 267–287 (IIGVVITMSYLVGDSLILILG) threads the bilayer. The Cytoplasmic segment spans residues 288 to 316 (NNKLKQTFVAILPCECGHPKPGSKRFFAS).

Belongs to the G-protein coupled receptor T2R family.

Its subcellular location is the membrane. In terms of biological role, gustducin-coupled receptor implicated in the perception of bitter compounds in the oral cavity and the gastrointestinal tract. Signals through PLCB2 and the calcium-regulated cation channel TRPM5. This chain is Taste receptor type 2 member 3, found in Rattus norvegicus (Rat).